Consider the following 258-residue polypeptide: Probable dihydroorotate dehydrogenase B (NAD(+)), electron transfer subunit (258 aa).

Positions 1 to 90 (MRPISATIKE…RGPYGNGWEI (90 aa)) constitute an FAD-binding FR-type domain. C210, C215, C218, and C228 together coordinate [2Fe-2S] cluster.

The protein belongs to the PyrK family. As to quaternary structure, heterotetramer of 2 PyrK and 2 PyrD type B subunits. It depends on [2Fe-2S] cluster as a cofactor. The cofactor is FAD.

Its pathway is pyrimidine metabolism; UMP biosynthesis via de novo pathway; orotate from (S)-dihydroorotate (NAD(+) route): step 1/1. In terms of biological role, responsible for channeling the electrons from the oxidation of dihydroorotate from the FMN redox center in the PyrD type B subunit to the ultimate electron acceptor NAD(+). The protein is Probable dihydroorotate dehydrogenase B (NAD(+)), electron transfer subunit of Methanocella arvoryzae (strain DSM 22066 / NBRC 105507 / MRE50).